Consider the following 431-residue polypeptide: Synaptotagmin-11 (431 aa).

Over 1–15 the chain is Vesicular; sequence MAEITNIRPSFDVSP. A helical membrane pass occupies residues 16–36; the sequence is VVAGLIGASVLVVCVSVTVFV. The Cytoplasmic segment spans residues 37-431; sequence WSCCHQQAEK…VAKWHSLSEY (395 aa). The residue at position 134 (serine 134) is a Phosphoserine. Positions 134–154 are disordered; that stretch reads SPITSLTPGESKTTSPSSPEE. Low complexity predominate over residues 140–151; sequence TPGESKTTSPSS. C2 domains are found at residues 157 to 279 and 291 to 426; these read MLGS…QLTR and SRGE…AKWH. Positions 250, 253, and 256 each coordinate Ca(2+).

The protein belongs to the synaptotagmin family. In terms of assembly, homodimer. Can also form heterodimers. Interacts with PRKN. Interacts (via C2 2 domain) with AGO2 and SND1; the interaction with SND1 is direct. Interacts with KIF1A; the interaction increases in presence of calcium. Requires Ca(2+) as cofactor. In terms of processing, ubiquitinated, at least by PRKN, and targeted to the proteasome complex for degradation. Ubiquitination is inhibited by ATP13A2.

Its subcellular location is the cytoplasmic vesicle membrane. It localises to the perikaryon. The protein localises to the golgi apparatus. It is found in the trans-Golgi network membrane. The protein resides in the recycling endosome membrane. Its subcellular location is the lysosome membrane. It localises to the cytoplasmic vesicle. The protein localises to the phagosome. It is found in the cell projection. The protein resides in the axon. Its subcellular location is the dendrite. It localises to the postsynaptic density. The protein localises to the clathrin-coated vesicle membrane. Its function is as follows. Synaptotagmin family member involved in vesicular and membrane trafficking which does not bind Ca(2+). Inhibits clathrin-mediated and bulk endocytosis, functions to ensure precision in vesicle retrieval. Plays an important role in dopamine transmission by regulating endocytosis and the vesicle-recycling process. Essential component of a neuronal vesicular trafficking pathway that differs from the synaptic vesicle trafficking pathway but is crucial for development and synaptic plasticity. In macrophages and microglia, inhibits the conventional cytokine secretion, of at least IL6 and TNF, and phagocytosis. In astrocytes, regulates lysosome exocytosis, mechanism required for the repair of injured astrocyte cell membrane. Required for the ATP13A2-mediated regulation of the autophagy-lysosome pathway. The sequence is that of Synaptotagmin-11 from Homo sapiens (Human).